The following is a 180-amino-acid chain: Inorganic pyrophosphatase (180 aa).

The substrate site is built by Lys30, Arg44, and Tyr56. Residues Asp66, Asp71, and Asp103 each contribute to the Mg(2+) site. Tyr142 contributes to the substrate binding site.

It belongs to the PPase family. In terms of assembly, homohexamer. Requires Mg(2+) as cofactor.

It is found in the cytoplasm. The catalysed reaction is diphosphate + H2O = 2 phosphate + H(+). Catalyzes the hydrolysis of inorganic pyrophosphate (PPi) forming two phosphate ions. This chain is Inorganic pyrophosphatase, found in Buchnera aphidicola subsp. Schizaphis graminum (strain Sg).